The sequence spans 371 residues: Mitogen-activated protein kinase homolog NTF6 (371 aa).

The Protein kinase domain maps to 38–324 (IPPIQPVGRG…VEDALNHPFL (287 aa)). Residues 44–52 (VGRGAYGMV) and Lys67 each bind ATP. Asp164 (proton acceptor) is an active-site residue. Residue Thr196 is modified to Phosphothreonine. Positions 196 to 198 (TEY) match the TXY motif. Tyr198 carries the phosphotyrosine modification.

Belongs to the protein kinase superfamily. CMGC Ser/Thr protein kinase family. MAP kinase subfamily. Mg(2+) is required as a cofactor. In terms of processing, dually phosphorylated on Thr-196 and Tyr-198, which activates the enzyme. Very low autophosphorylation, although dramatically increased when Mn(2+) is added to the reaction instead of Mg(2+).

It catalyses the reaction L-seryl-[protein] + ATP = O-phospho-L-seryl-[protein] + ADP + H(+). The enzyme catalyses L-threonyl-[protein] + ATP = O-phospho-L-threonyl-[protein] + ADP + H(+). With respect to regulation, activated by tyrosine and threonine phosphorylation. This is Mitogen-activated protein kinase homolog NTF6 (NTF6) from Nicotiana tabacum (Common tobacco).